A 398-amino-acid chain; its full sequence is Putative tyrosine-protein phosphatase C15H7.3 (398 aa).

Residues 1–15 (MERSQKSARKKKKTS) show a composition bias toward basic residues. The tract at residues 1-114 (MERSQKSARK…EPWSEEEPAK (114 aa)) is disordered. Residues 18–40 (GNDRSIRSERKSKQKKPAGEKSQ) are compositionally biased toward basic and acidic residues. Residues 41–50 (KSRRTRKSRG) show a composition bias toward basic residues. Residues 55 to 73 (GFTSRETIQPSSSGQSEGT) are compositionally biased toward polar residues. The span at 74 to 114 (TRMDDQKDEKKDDKKEEKKEERKEEKKEEVKEPWSEEEPAK) shows a compositional bias: basic and acidic residues. The Tyrosine-protein phosphatase domain maps to 125–376 (TNVGGTFKQT…GTVHRSMACW (252 aa)).

This sequence belongs to the protein-tyrosine phosphatase family. Non-receptor class subfamily.

It catalyses the reaction O-phospho-L-tyrosyl-[protein] + H2O = L-tyrosyl-[protein] + phosphate. The sequence is that of Putative tyrosine-protein phosphatase C15H7.3 from Caenorhabditis elegans.